The primary structure comprises 355 residues: Serpentine receptor class epsilon-1 (355 aa).

The next 7 helical transmembrane spans lie at 28–48 (FELL…YATI), 56–76 (LNFI…GRFI), 102–122 (ILSS…SLAV), 144–164 (ISLF…IVML), 172–192 (VMAF…LVLF), 232–252 (VVLF…MYMS), and 268–288 (FAFN…IIFS).

This sequence belongs to the nematode receptor-like protein sre family.

It is found in the membrane. The chain is Serpentine receptor class epsilon-1 (sre-1) from Caenorhabditis elegans.